We begin with the raw amino-acid sequence, 386 residues long: Lipoyl synthase, mitochondrial (386 aa).

Residues cysteine 110, cysteine 115, cysteine 121, cysteine 141, cysteine 145, cysteine 148, and serine 356 each contribute to the [4Fe-4S] cluster site. Residues 124–345 (GNDKSKATAT…KEQALEMGFL (222 aa)) enclose the Radical SAM core domain.

This sequence belongs to the radical SAM superfamily. Lipoyl synthase family. [4Fe-4S] cluster serves as cofactor.

It is found in the mitochondrion. It catalyses the reaction [[Fe-S] cluster scaffold protein carrying a second [4Fe-4S](2+) cluster] + N(6)-octanoyl-L-lysyl-[protein] + 2 oxidized [2Fe-2S]-[ferredoxin] + 2 S-adenosyl-L-methionine + 4 H(+) = [[Fe-S] cluster scaffold protein] + N(6)-[(R)-dihydrolipoyl]-L-lysyl-[protein] + 4 Fe(3+) + 2 hydrogen sulfide + 2 5'-deoxyadenosine + 2 L-methionine + 2 reduced [2Fe-2S]-[ferredoxin]. It functions in the pathway protein modification; protein lipoylation via endogenous pathway; protein N(6)-(lipoyl)lysine from octanoyl-[acyl-carrier-protein]: step 2/2. Functionally, catalyzes the radical-mediated insertion of two sulfur atoms into the C-6 and C-8 positions of the octanoyl moiety bound to the lipoyl domains of lipoate-dependent enzymes, thereby converting the octanoylated domains into lipoylated derivatives. The protein is Lipoyl synthase, mitochondrial of Zygosaccharomyces rouxii (strain ATCC 2623 / CBS 732 / NBRC 1130 / NCYC 568 / NRRL Y-229).